Consider the following 136-residue polypeptide: Protein NrdI (136 aa).

Belongs to the NrdI family.

Probably involved in ribonucleotide reductase function. In Escherichia coli O1:K1 / APEC, this protein is Protein NrdI.